A 341-amino-acid polypeptide reads, in one-letter code: Ribulose-5-phosphate reductase 2 (341 aa).

The Zn(2+) site is built by cysteine 38, histidine 64, glutamate 65, and glutamate 144.

This sequence belongs to the zinc-containing alcohol dehydrogenase family. Heterodimer together with TarI. The cofactor is Zn(2+).

The catalysed reaction is D-ribitol 5-phosphate + NADP(+) = D-ribulose 5-phosphate + NADPH + H(+). It participates in cell wall biogenesis; poly(ribitol phosphate) teichoic acid biosynthesis. In terms of biological role, catalyzes the NADPH dependent reduction of D-ribulose 5-phosphate to D-ribitol 5-phosphate. This chain is Ribulose-5-phosphate reductase 2, found in Staphylococcus aureus (strain NCTC 8325 / PS 47).